The sequence spans 344 residues: Oxygen sensor histidine kinase NreB (344 aa).

Residues Cys58, Cys61, Cys73, and Cys76 each coordinate [4Fe-4S] cluster. Residues 147–344 enclose the Histidine kinase domain; that stretch reads ENERKRISRE…GTIITLDIPI (198 aa). His158 carries the post-translational modification Phosphohistidine; by autocatalysis.

[4Fe-4S] cluster is required as a cofactor. Autophosphorylated.

It localises to the cytoplasm. It catalyses the reaction ATP + protein L-histidine = ADP + protein N-phospho-L-histidine.. In terms of biological role, member of the two-component regulatory system NreB/NreC involved in the control of dissimilatory nitrate/nitrite reduction in response to oxygen. NreB functions as a direct oxygen sensor histidine kinase which is autophosphorylated, in the absence of oxygen, probably at the conserved histidine residue, and transfers its phosphate group probably to a conserved aspartate residue of NreC. NreB/NreC activates the expression of the nitrate (narGHJI) and nitrite (nir) reductase operons, as well as the putative nitrate transporter gene narT. The sequence is that of Oxygen sensor histidine kinase NreB (nreB) from Staphylococcus epidermidis (strain ATCC 12228 / FDA PCI 1200).